A 24-amino-acid polypeptide reads, in one-letter code: Humanin-like 7 (24 aa).

Belongs to the humanin family. Expressed in testis.

The protein localises to the secreted. Its subcellular location is the cytoplasm. Functionally, plays a role as a neuroprotective and antiapoptotic factor. This is Humanin-like 7 from Homo sapiens (Human).